Reading from the N-terminus, the 516-residue chain is GMP synthase [glutamine-hydrolyzing] (516 aa).

One can recognise a Glutamine amidotransferase type-1 domain in the interval 8 to 198; the sequence is KILILDFGSQ…VVNICGCDTL (191 aa). The Nucleophile role is filled by Cys84. Active-site residues include His172 and Glu174. The 193-residue stretch at 199–391 folds into the GMPS ATP-PPase domain; sequence WNIENIIEND…LGLPYNMLYR (193 aa). 226–232 contributes to the ATP binding site; it reads SGGVDSS.

Homodimer.

It catalyses the reaction XMP + L-glutamine + ATP + H2O = GMP + L-glutamate + AMP + diphosphate + 2 H(+). It participates in purine metabolism; GMP biosynthesis; GMP from XMP (L-Gln route): step 1/1. In terms of biological role, catalyzes the synthesis of GMP from XMP. This is GMP synthase [glutamine-hydrolyzing] from Francisella tularensis subsp. tularensis (strain WY96-3418).